The chain runs to 368 residues: Core histone macro-H2A.1 (368 aa).

Residues 2-117 (SSRGGKKKST…NIHPELLAKK (116 aa)) form the Histone H2A domain. N6-lactoyllysine; alternate occurs at positions 7 and 9. An N6-methyllysine modification is found at lysine 18. An N6-acetyllysine; alternate modification is found at lysine 116. Residue lysine 116 forms a Glycyl lysine isopeptide (Lys-Gly) (interchain with G-Cter in ubiquitin); alternate linkage. Lysine 117 participates in a covalent cross-link: Glycyl lysine isopeptide (Lys-Gly) (interchain with G-Cter in ubiquitin). Position 123 is an N6-acetyllysine; alternate (lysine 123). Lysine 123 carries the post-translational modification N6,N6-dimethyllysine; alternate. Lysine 123 participates in a covalent cross-link: Glycyl lysine isopeptide (Lys-Gly) (interchain with G-Cter in SUMO2); alternate. The disordered stretch occupies residues 128-179 (ITPPPAKKAKSPSQKKPVAKKTGGKKGARKSKKQGEVSKAASADSTTEGAPT). The residue at position 129 (threonine 129) is a Phosphothreonine. Residues 144–159 (PVAKKTGGKKGARKSK) show a composition bias toward basic residues. Lysine 166 is covalently cross-linked (Glycyl lysine isopeptide (Lys-Gly) (interchain with G-Cter in SUMO2)). 2 positions are modified to phosphoserine: serine 169 and serine 172. One can recognise a Macro domain in the interval 183-366 (TVLSTKSLFL…IYVQEMAKLD (184 aa)). Lysine 188 is covalently cross-linked (Glycyl lysine isopeptide (Lys-Gly) (interchain with G-Cter in SUMO2)). 8 residues coordinate a glycoprotein: aspartate 202, isoleucine 203, valine 225, serine 274, glycine 311, serine 312, glycine 313, and asparagine 315. Residue lysine 319 forms a Glycyl lysine isopeptide (Lys-Gly) (interchain with G-Cter in SUMO2) linkage.

Belongs to the histone H2A family. As to quaternary structure, the nucleosome is a histone octamer containing two molecules each of H2A, H2B, H3 and H4 assembled in one H3-H4 heterotetramer and two H2A-H2B heterodimers. Interacts with HDAC1 and HDAC2. Interacts with SPOP. Part of a complex consisting of MACROH2A1, CUL3 and SPOP. Interacts with PARP1. In terms of processing, monoubiquitinated at either Lys-116 or Lys-117. May also be polyubiquitinated. Ubiquitination is mediated by the CUL3/SPOP E3 complex and does not promote proteasomal degradation. Instead, it is required for enrichment in inactive X chromosome chromatin. In terms of tissue distribution, present only in liver and brain (at protein level). As to expression, present in brain, thymus, testis, liver and kidney (at protein level).

It is found in the nucleus. It localises to the chromosome. In terms of biological role, variant histone H2A which replaces conventional H2A in a subset of nucleosomes where it represses transcription. Nucleosomes wrap and compact DNA into chromatin, limiting DNA accessibility to the cellular machineries which require DNA as a template. Histones thereby play a central role in transcription regulation, DNA repair, DNA replication and chromosomal stability. DNA accessibility is regulated via a complex set of post-translational modifications of histones, also called histone code, and nucleosome remodeling. Involved in stable X chromosome inactivation. Inhibits the binding of transcription factors, including NF-kappa-B, and interferes with the activity of remodeling SWI/SNF complexes. Inhibits histone acetylation by EP300 and recruits class I HDACs, which induces a hypoacetylated state of chromatin. Functionally, isoform that specifically binds poly-ADP-ribose and O-acetyl-ADP-ribose and plays a key role in NAD(+) metabolism. Able to bind to the ends of poly-ADP-ribose chains created by PARP1 and cap them. This prevents PARP1 from further addition of ADP-ribose and thus limits the consumption of nuclear NAD(+), allowing the cell to maintain proper NAD(+) levels in both the nucleus and the mitochondria to promote proper mitochondrial respiration. Increases the expression of genes involved in redox metabolism, including SOD3. Its function is as follows. In contrast to isoform 1, does not bind poly-ADP-ribose. Represses SOD3 gene expression. The polypeptide is Core histone macro-H2A.1 (Rattus norvegicus (Rat)).